The following is a 160-amino-acid chain: MTISKNNKMMAHLNYRMKIILQDGRTFIGFFKAFDKHMNILLAECEEHRQIKPKAGKKTDGEEKRILGLVLVRGEHIVSMTVDGPPPRDDDSVRLAKAGGAGGVGQAKPGGRGMPAMPGMPGMPPGGAPGGLSGAMRGHGGPGMAAMQPGYGGPPGGRPF.

The Sm domain occupies 4–86; it reads SKNNKMMAHL…IVSMTVDGPP (83 aa). The disordered stretch occupies residues 80–160; the sequence is MTVDGPPPRD…YGGPPGGRPF (81 aa). Gly residues-rich tracts occupy residues 99–113, 128–143, and 150–160; these read GGAGGVGQAKPGGRG, APGGLSGAMRGHGGPG, and GYGGPPGGRPF.

The protein belongs to the snRNP SmB/SmN family.

The protein resides in the nucleus. It localises to the cytoplasm. Its subcellular location is the cytosol. Functionally, plays a role in pre-mRNA splicing as a core component of the spliceosomal U1, U2, U4 and U5 small nuclear ribonucleoproteins (snRNPs), the building blocks of the spliceosome. The sequence is that of Probable small nuclear ribonucleoprotein-associated protein B (snr-2) from Caenorhabditis elegans.